Here is a 34-residue protein sequence, read N- to C-terminus: N(4)-(Beta-N-acetylglucosaminyl)-L-asparaginase (34 aa).

T18 (nucleophile) is an active-site residue.

The protein belongs to the Ntn-hydrolase family. In terms of assembly, heterotetramer of two alpha and two beta chains arranged as a dimer of alpha/beta heterodimers. Cleaved into an alpha and beta chain by autocatalysis; this activates the enzyme. The N-terminal residue of the beta subunit is responsible for the nucleophile hydrolase activity. Post-translationally, N-glycosylated.

The protein resides in the lysosome. The catalysed reaction is N(4)-(beta-N-acetyl-D-glucosaminyl)-L-asparagine + H2O = N-acetyl-beta-D-glucosaminylamine + L-aspartate + H(+). Its function is as follows. Cleaves the GlcNAc-Asn bond which joins oligosaccharides to the peptide of asparagine-linked glycoproteins. The polypeptide is N(4)-(Beta-N-acetylglucosaminyl)-L-asparaginase (AGA) (Sus scrofa (Pig)).